Consider the following 167-residue polypeptide: uncharacterized protein (167 aa).

A run of 2 helical transmembrane segments spans residues 96–115 (YVPA…FNFY) and 119–138 (WGAL…IIAV).

It localises to the cell membrane. This is an uncharacterized protein from Bacillus subtilis (strain 168).